The chain runs to 101 residues: NADH-quinone oxidoreductase subunit K (101 aa).

Transmembrane regions (helical) follow at residues 4–24 (LEHY…GLFL), 30–50 (IVLL…LVAF), and 65–85 (FVLT…VCFF).

This sequence belongs to the complex I subunit 4L family. As to quaternary structure, NDH-1 is composed of 14 different subunits. Subunits NuoA, H, J, K, L, M, N constitute the membrane sector of the complex.

The protein resides in the cell inner membrane. The catalysed reaction is a quinone + NADH + 5 H(+)(in) = a quinol + NAD(+) + 4 H(+)(out). Functionally, NDH-1 shuttles electrons from NADH, via FMN and iron-sulfur (Fe-S) centers, to quinones in the respiratory chain. The immediate electron acceptor for the enzyme in this species is believed to be ubiquinone. Couples the redox reaction to proton translocation (for every two electrons transferred, four hydrogen ions are translocated across the cytoplasmic membrane), and thus conserves the redox energy in a proton gradient. This Ruegeria pomeroyi (strain ATCC 700808 / DSM 15171 / DSS-3) (Silicibacter pomeroyi) protein is NADH-quinone oxidoreductase subunit K.